Reading from the N-terminus, the 631-residue chain is 1-deoxy-D-xylulose-5-phosphate synthase (631 aa).

Thiamine diphosphate is bound by residues histidine 73 and 114–116 (GHS). Aspartate 145 is a binding site for Mg(2+). Residues 146–147 (GA), asparagine 174, tyrosine 285, and glutamate 366 contribute to the thiamine diphosphate site. Asparagine 174 provides a ligand contact to Mg(2+).

The protein belongs to the transketolase family. DXPS subfamily. In terms of assembly, homodimer. The cofactor is Mg(2+). Thiamine diphosphate serves as cofactor.

The catalysed reaction is D-glyceraldehyde 3-phosphate + pyruvate + H(+) = 1-deoxy-D-xylulose 5-phosphate + CO2. It functions in the pathway metabolic intermediate biosynthesis; 1-deoxy-D-xylulose 5-phosphate biosynthesis; 1-deoxy-D-xylulose 5-phosphate from D-glyceraldehyde 3-phosphate and pyruvate: step 1/1. Its function is as follows. Catalyzes the acyloin condensation reaction between C atoms 2 and 3 of pyruvate and glyceraldehyde 3-phosphate to yield 1-deoxy-D-xylulose-5-phosphate (DXP). In Desulfitobacterium hafniense (strain Y51), this protein is 1-deoxy-D-xylulose-5-phosphate synthase.